A 305-amino-acid polypeptide reads, in one-letter code: UDP-3-O-acyl-N-acetylglucosamine deacetylase (305 aa).

Zn(2+) is bound by residues His-79, His-238, and Asp-242. His-265 acts as the Proton donor in catalysis.

The protein belongs to the LpxC family. Zn(2+) serves as cofactor.

The enzyme catalyses a UDP-3-O-[(3R)-3-hydroxyacyl]-N-acetyl-alpha-D-glucosamine + H2O = a UDP-3-O-[(3R)-3-hydroxyacyl]-alpha-D-glucosamine + acetate. It participates in glycolipid biosynthesis; lipid IV(A) biosynthesis; lipid IV(A) from (3R)-3-hydroxytetradecanoyl-[acyl-carrier-protein] and UDP-N-acetyl-alpha-D-glucosamine: step 2/6. Functionally, catalyzes the hydrolysis of UDP-3-O-myristoyl-N-acetylglucosamine to form UDP-3-O-myristoylglucosamine and acetate, the committed step in lipid A biosynthesis. The protein is UDP-3-O-acyl-N-acetylglucosamine deacetylase of Colwellia psychrerythraea (strain 34H / ATCC BAA-681) (Vibrio psychroerythus).